A 151-amino-acid chain; its full sequence is Small ribosomal subunit protein uS19 (151 aa).

It belongs to the universal ribosomal protein uS19 family.

Protein S19 forms a complex with S13 that binds strongly to the 16S ribosomal RNA. The polypeptide is Small ribosomal subunit protein uS19 (Picrophilus torridus (strain ATCC 700027 / DSM 9790 / JCM 10055 / NBRC 100828 / KAW 2/3)).